The following is a 284-amino-acid chain: MRLIIVSGRSGSGKSTALDVLEDSGFYCIDNLPAGLLPQLAENALINTELLQPKVAVSIDARNLPSHLMRFPELLEEARARHIQCDVLYLDADEEVLLKRFSETRRRHPLTNANRSLAEAIRVESDLLGPIADLADLKIDTTNLNLYQLRDSIKLRLLNQPEPGTAFLVESFGFKRGMPVDADLVFDVRCLPNPYWKPELREHSGLDQPVIDYLAAQPDVEDMYNDISSYLLKWLPRFAASNRAYVTIAIGCTGGHHRSVYITERLGRQLQQTLKNVQVRHRDL.

8–15 (GRSGSGKS) lines the ATP pocket. Residue 60–63 (DARN) participates in GTP binding.

The protein belongs to the RapZ-like family.

In terms of biological role, displays ATPase and GTPase activities. The polypeptide is Nucleotide-binding protein PP_0949 (Pseudomonas putida (strain ATCC 47054 / DSM 6125 / CFBP 8728 / NCIMB 11950 / KT2440)).